Consider the following 408-residue polypeptide: Putative mannan endo-1,4-beta-mannosidase 4 (408 aa).

A signal peptide spans 1-23; the sequence is MKCLCFIVLLAIVIAQSYVGVEA. N-linked (GlcNAc...) asparagine glycosylation occurs at Asn-73. Substrate is bound by residues Trp-85 and Asn-201. Glu-202 functions as the Proton donor in the catalytic mechanism. Catalysis depends on Glu-322, which acts as the Nucleophile. A substrate-binding site is contributed by Trp-364.

It belongs to the glycosyl hydrolase 5 (cellulase A) family.

The protein resides in the secreted. The enzyme catalyses Random hydrolysis of (1-&gt;4)-beta-D-mannosidic linkages in mannans, galactomannans and glucomannans.. This Arabidopsis thaliana (Mouse-ear cress) protein is Putative mannan endo-1,4-beta-mannosidase 4 (MAN4).